A 358-amino-acid chain; its full sequence is Peptide chain release factor 1 (358 aa).

Gln-237 carries the post-translational modification N5-methylglutamine.

It belongs to the prokaryotic/mitochondrial release factor family. In terms of processing, methylated by PrmC. Methylation increases the termination efficiency of RF1.

Its subcellular location is the cytoplasm. In terms of biological role, peptide chain release factor 1 directs the termination of translation in response to the peptide chain termination codons UAG and UAA. The polypeptide is Peptide chain release factor 1 (Streptomyces coelicolor (strain ATCC BAA-471 / A3(2) / M145)).